The chain runs to 179 residues: Bifunctional protein PyrR (179 aa).

A PRPP-binding motif is present at residues 99–111; sequence VILVDDVLYTGRT.

It belongs to the purine/pyrimidine phosphoribosyltransferase family. PyrR subfamily. As to quaternary structure, homodimer and homohexamer; in equilibrium.

It carries out the reaction UMP + diphosphate = 5-phospho-alpha-D-ribose 1-diphosphate + uracil. Functionally, regulates transcriptional attenuation of the pyrimidine nucleotide (pyr) operon by binding in a uridine-dependent manner to specific sites on pyr mRNA. This disrupts an antiterminator hairpin in the RNA and favors formation of a downstream transcription terminator, leading to a reduced expression of downstream genes. In terms of biological role, also displays a weak uracil phosphoribosyltransferase activity which is not physiologically significant. This is Bifunctional protein PyrR from Limosilactobacillus fermentum (strain NBRC 3956 / LMG 18251) (Lactobacillus fermentum).